The sequence spans 173 residues: Large ribosomal subunit protein bL9 (173 aa).

Positions 150 to 173 are disordered; the sequence is KQEDKKSLSKKLNKADEQGERAEV.

The protein belongs to the bacterial ribosomal protein bL9 family.

Functionally, binds to the 23S rRNA. This chain is Large ribosomal subunit protein bL9, found in Borreliella burgdorferi (strain ZS7) (Borrelia burgdorferi).